Consider the following 1209-residue polypeptide: DNA-directed RNA polymerase subunit beta (1209 aa).

Residues Gln1173–Glu1192 show a composition bias toward basic and acidic residues. The disordered stretch occupies residues Gln1173–Lys1209.

It belongs to the RNA polymerase beta chain family. In terms of assembly, the RNAP catalytic core consists of 2 alpha, 1 beta, 1 beta' and 1 omega subunit. When a sigma factor is associated with the core the holoenzyme is formed, which can initiate transcription.

The enzyme catalyses RNA(n) + a ribonucleoside 5'-triphosphate = RNA(n+1) + diphosphate. DNA-dependent RNA polymerase catalyzes the transcription of DNA into RNA using the four ribonucleoside triphosphates as substrates. This is DNA-directed RNA polymerase subunit beta from Lactobacillus johnsonii (strain CNCM I-12250 / La1 / NCC 533).